Consider the following 177-residue polypeptide: Cytidylate kinase (177 aa).

7 to 15 contacts ATP; sequence GSPGSGTTT.

This sequence belongs to the cytidylate kinase family. Type 2 subfamily.

Its subcellular location is the cytoplasm. The catalysed reaction is CMP + ATP = CDP + ADP. It catalyses the reaction dCMP + ATP = dCDP + ADP. The polypeptide is Cytidylate kinase (Methanocorpusculum labreanum (strain ATCC 43576 / DSM 4855 / Z)).